Here is a 989-residue protein sequence, read N- to C-terminus: Cellulose synthase A catalytic subunit 4 [UDP-forming] (989 aa).

Residues 1 to 184 are Cytoplasmic-facing; that stretch reads MMESGVPPCA…SRIIPISKNK (184 aa). C9, C12, C20, C23, C28, C31, C43, and C46 together coordinate Zn(2+). An RING-type; degenerate zinc finger spans residues 9-47; sequence CAACGDDAHAACRACSYALCKACLDEDAAEGRTTCARCG. A compositionally biased stretch (basic residues) spans 138–149; it reads KKEKKASAKKAA. The segment at 138–158 is disordered; that stretch reads KKEKKASAKKAAAKAQAPPVE. A helical membrane pass occupies residues 185–205; the sequence is LTPYRAVIIMRLVVLGLFFHY. Residues 206-213 lie on the Extracellular side of the membrane; the sequence is RITNPVYS. A helical membrane pass occupies residues 214–234; sequence AFGLWMTSVICEIWFGFSWIL. At 235 to 772 the chain is on the cytoplasmic side; the sequence is DQFPKWCPIN…INTIVYPFTS (538 aa). UDP-alpha-D-glucose contacts are provided by S272, K278, E279, and D308. D308 is an active-site residue. A coiled-coil region spans residues 362 to 389; sequence VKERRAMKRDYEEYKVRINALVAKAQKT. K449 contributes to the UDP-alpha-D-glucose binding site. K450 and D474 together coordinate Mn(2+). Residue D688 is part of the active site. The helical transmembrane segment at 773-793 threads the bilayer; sequence LPLIAYCCLPAICLLTGKFII. Over 794–798 the chain is Extracellular; the sequence is PTLSN. The chain crosses the membrane as a helical span at residues 799-819; sequence AATIWFLGLFISIIVTSVLEL. Over 820-835 the chain is Cytoplasmic; it reads RWSGIGIEDWWRNEQF. The helical transmembrane segment at 836 to 856 threads the bilayer; the sequence is WVIGGVSAHLFAVFQGILKMI. Over 857-884 the chain is Extracellular; sequence AGLDTNFTVTAKATDDTEFGELYVFKWT. N862 is a glycosylation site (N-linked (GlcNAc...) asparagine). Residues 885–905 traverse the membrane as a helical segment; it reads TVLIPPTSILVLNLVGVVAGF. Topologically, residues 906–916 are cytoplasmic; it reads SDALNSGYESW. The helical transmembrane segment at 917–937 threads the bilayer; it reads GPLFGKVFFAMWVIMHLYPFL. The Extracellular segment spans residues 938–946; sequence KGLMGRQNR. Residues 947 to 967 form a helical membrane-spanning segment; that stretch reads TPTIVVLWSVLLASVFSLLWV. The Cytoplasmic segment spans residues 968-989; it reads KIDPFIGSSETTTTNSCANFDC.

The protein belongs to the glycosyltransferase 2 family. Plant cellulose synthase subfamily. Requires Mn(2+) as cofactor. The cofactor is Zn(2+).

The protein localises to the cell membrane. It catalyses the reaction [(1-&gt;4)-beta-D-glucosyl](n) + UDP-alpha-D-glucose = [(1-&gt;4)-beta-D-glucosyl](n+1) + UDP + H(+). The protein operates within glycan metabolism; plant cellulose biosynthesis. Functionally, catalytic subunit of cellulose synthase terminal complexes ('rosettes'), required for beta-1,4-glucan microfibril crystallization, a major mechanism of the cell wall formation. Involved in the secondary cell wall formation. The sequence is that of Cellulose synthase A catalytic subunit 4 [UDP-forming] (CESA4) from Oryza sativa subsp. indica (Rice).